The chain runs to 525 residues: Rho guanine nucleotide exchange factor gef3 (525 aa).

Residues 72-268 enclose the DH domain; sequence AIISVLEEFR…EIASQRMNEL (197 aa).

It is found in the cytoplasm. Functionally, has a role in the control of cell polarity and cytokinesis. Involved in bipolar growth and septum formation. This chain is Rho guanine nucleotide exchange factor gef3 (gef3), found in Schizosaccharomyces pombe (strain 972 / ATCC 24843) (Fission yeast).